Consider the following 227-residue polypeptide: Nucleoside triphosphate pyrophosphatase (227 aa).

The active-site Proton acceptor is Asp-77.

This sequence belongs to the Maf family. It depends on a divalent metal cation as a cofactor.

Its subcellular location is the cytoplasm. The enzyme catalyses a ribonucleoside 5'-triphosphate + H2O = a ribonucleoside 5'-phosphate + diphosphate + H(+). It carries out the reaction a 2'-deoxyribonucleoside 5'-triphosphate + H2O = a 2'-deoxyribonucleoside 5'-phosphate + diphosphate + H(+). Nucleoside triphosphate pyrophosphatase. May have a dual role in cell division arrest and in preventing the incorporation of modified nucleotides into cellular nucleic acids. This is Nucleoside triphosphate pyrophosphatase from Rickettsia typhi (strain ATCC VR-144 / Wilmington).